A 385-amino-acid polypeptide reads, in one-letter code: Dual-specificity RNA methyltransferase RlmN (385 aa).

The active-site Proton acceptor is the Glu113. The region spanning 120-352 is the Radical SAM core domain; that stretch reads VGRAGALCVS…NRAGYASPIR (233 aa). A disulfide bridge connects residues Cys127 and Cys363. 3 residues coordinate [4Fe-4S] cluster: Cys134, Cys138, and Cys141. S-adenosyl-L-methionine is bound by residues 189-190, Ser221, 243-245, and Asn320; these read GE and SLH. Cys363 (S-methylcysteine intermediate) is an active-site residue.

It belongs to the radical SAM superfamily. RlmN family. [4Fe-4S] cluster is required as a cofactor.

It is found in the cytoplasm. It carries out the reaction adenosine(2503) in 23S rRNA + 2 reduced [2Fe-2S]-[ferredoxin] + 2 S-adenosyl-L-methionine = 2-methyladenosine(2503) in 23S rRNA + 5'-deoxyadenosine + L-methionine + 2 oxidized [2Fe-2S]-[ferredoxin] + S-adenosyl-L-homocysteine. The enzyme catalyses adenosine(37) in tRNA + 2 reduced [2Fe-2S]-[ferredoxin] + 2 S-adenosyl-L-methionine = 2-methyladenosine(37) in tRNA + 5'-deoxyadenosine + L-methionine + 2 oxidized [2Fe-2S]-[ferredoxin] + S-adenosyl-L-homocysteine. Functionally, specifically methylates position 2 of adenine 2503 in 23S rRNA and position 2 of adenine 37 in tRNAs. m2A2503 modification seems to play a crucial role in the proofreading step occurring at the peptidyl transferase center and thus would serve to optimize ribosomal fidelity. This chain is Dual-specificity RNA methyltransferase RlmN, found in Phenylobacterium zucineum (strain HLK1).